A 121-amino-acid chain; its full sequence is Large ribosomal subunit protein uL18 (121 aa).

Belongs to the universal ribosomal protein uL18 family. As to quaternary structure, part of the 50S ribosomal subunit; part of the 5S rRNA/L5/L18/L25 subcomplex. Contacts the 5S and 23S rRNAs.

This is one of the proteins that bind and probably mediate the attachment of the 5S RNA into the large ribosomal subunit, where it forms part of the central protuberance. This Burkholderia ambifaria (strain MC40-6) protein is Large ribosomal subunit protein uL18.